A 280-amino-acid chain; its full sequence is Dihydropteroate synthase (280 aa).

In terms of domain architecture, Pterin-binding spans 1 to 265 (MSPAPVQVMG…DVRASVDAIK (265 aa)). Asparagine 13 provides a ligand contact to Mg(2+). (7,8-dihydropterin-6-yl)methyl diphosphate-binding positions include aspartate 86, asparagine 105, aspartate 177, lysine 213, and 253–255 (RVH).

It belongs to the DHPS family. In terms of assembly, homodimer. It depends on Mg(2+) as a cofactor.

It carries out the reaction (7,8-dihydropterin-6-yl)methyl diphosphate + 4-aminobenzoate = 7,8-dihydropteroate + diphosphate. The protein operates within cofactor biosynthesis; tetrahydrofolate biosynthesis; 7,8-dihydrofolate from 2-amino-4-hydroxy-6-hydroxymethyl-7,8-dihydropteridine diphosphate and 4-aminobenzoate: step 1/2. In terms of biological role, catalyzes the condensation of para-aminobenzoate (pABA) with 6-hydroxymethyl-7,8-dihydropterin diphosphate (DHPt-PP) to form 7,8-dihydropteroate (H2Pte), the immediate precursor of folate derivatives. In Mycobacterium bovis (strain ATCC BAA-935 / AF2122/97), this protein is Dihydropteroate synthase (folP1).